Here is a 505-residue protein sequence, read N- to C-terminus: Maturase K (505 aa).

Belongs to the intron maturase 2 family. MatK subfamily.

The protein localises to the plastid. The protein resides in the chloroplast. Functionally, usually encoded in the trnK tRNA gene intron. Probably assists in splicing its own and other chloroplast group II introns. The protein is Maturase K of Ficus carica (Common fig).